Reading from the N-terminus, the 602-residue chain is Multicopper oxidase aurL2 (602 aa).

Residues 1–17 (MLFRFLALLPFVAGAFA) form the signal peptide. Plastocyanin-like domains are found at residues 38–149 (DIKI…VRDA) and 160–317 (IPLL…KYRC). N52 and N80 each carry an N-linked (GlcNAc...) asparagine glycan. Cu cation contacts are provided by H84, H86, H130, and H132. Residues N201, N247, N337, N383, N387, N419, and N424 are each glycosylated (N-linked (GlcNAc...) asparagine). A Plastocyanin-like 3 domain is found at 421–556 (TTPNYTLALE…QVMGMATVWV (136 aa)). Residue H469 participates in Cu cation binding. Residues N482 and N486 are each glycosylated (N-linked (GlcNAc...) asparagine).

The protein belongs to the multicopper oxidase family.

It participates in pigment biosynthesis. Its function is as follows. Multicopper oxidase; part of the gene cluster that mediates the biosynthesis of aurofusarin, a red mycelium pigment which is acting as a mycotoxin. The first step is performed by the polyketide synthase which condenses one acetyl-CoA and 6 malonyl-CoA units to form the first intermediate, the cyclic heptaketide and yellow pigment YWA1. The C2 hydroxyl group in the pyrone ring of YWA1 is probably formed during ring closure by an aldol-type cyclization reaction. The dehydratase aurZ then acts as the first tailoring enzyme in the aurofusarin biosynthetic pathway by converting YWA1 to nor-rubrofusarin. Nor-rubrofusarin is then methylated to rubrofusarin by the O-methyltransferase aurJ. Rubrofusarin is then transported across the plasma membrane by the rubrofusarin-specific pump aurT for further enzymatic processing by the extracellular complex composed of GIP1, aurF, aurO and aurS to yield aurofusarin. In Gibberella zeae (strain ATCC MYA-4620 / CBS 123657 / FGSC 9075 / NRRL 31084 / PH-1) (Wheat head blight fungus), this protein is Multicopper oxidase aurL2 (aurL2).